The following is a 444-amino-acid chain: Transcription factor PIF5 (444 aa).

Positions 26–39 are involved in interaction with phyB; the sequence is EDELVELLWRDGQV. 2 disordered regions span residues 154–265 and 416–444; these read HCGS…NLSE and MLGF…GKIG. The span at 155–171 shows a compositional bias: polar residues; it reads CGSNQSTNIHQATTLPV. Residues 175–185 show a composition bias toward basic and acidic residues; that stretch reads DRSKNVEERLD. Low complexity predominate over residues 187–197; the sequence is SSGGSSGCSYG. Polar residues predominate over residues 224–244; sequence ESVSQSDIGLTSTDDQTMGNK. The segment covering 256-265 has biased composition (basic and acidic residues); that stretch reads RAAEVHNLSE. One can recognise a bHLH domain in the interval 256-305; the sequence is RAAEVHNLSERRRRDRINERMKALQELIPHCSRTDKASILDEAIDYLKSL. The span at 424–437 shows a compositional bias: polar residues; that stretch reads GPQSQLSAPATTDS. Ser437 bears the Phosphoserine mark.

In terms of assembly, homodimer. Interacts specifically with the Pfr form of phytochrome B and with TOC1/APRR1. May form a heterodimer with PIF3. Interacts with PHYB, CRY1 and CRY2 in the nucleus in response to low blue light (LBL). Interacts with TOPP4. Associates to PTAC12/HMR/PAP5 which acts as a transcriptional coactivator. In terms of processing, phosphorylated. Additional phosphorylations induced within 60 seconds following phytochrome B photoactivation. Post-translationally, dephosphorylated by TOPP4 during photomorphogenesis, leading to subsequent degradation of PIF5 by the proteasomal pathway. In terms of tissue distribution, mainly expressed in leaves and seedlings, and, to a lower extent, in stems, fruits, flowers and roots.

Its subcellular location is the nucleus. Its function is as follows. Transcription factor acting negatively in the phytochrome B signaling pathway to promote the shade-avoidance response. Regulates PHYB abundance at the post-transcriptional level, possibly via the ubiquitin-proteasome pathway. Promotes ethylene activity in the dark. May regulate the expression of a subset of genes by binding to the G-box motif. Might be involved in the integration of light-signals to control both circadian and photomorphogenic processes. Activated by CRY1 and CRY2 in response to low blue light (LBL) by direct binding at chromatin on E-box variant 5'-CA[CT]GTG-3' to stimulate specific gene expression to adapt global physiology (e.g. hypocotyl elongation in low blue light). This is Transcription factor PIF5 from Arabidopsis thaliana (Mouse-ear cress).